The following is a 372-amino-acid chain: DNA-directed RNA polymerase subunit alpha (372 aa).

The tract at residues 1–268 is alpha N-terminal domain (alpha-NTD); it reads MIFDEDSNSV…DQFQPFINFD (268 aa). The interval 280-372 is alpha C-terminal domain (alpha-CTD); the sequence is KDALPYDSNL…ESLSKQYSEE (93 aa).

It belongs to the RNA polymerase alpha chain family. Homodimer. The RNAP catalytic core consists of 2 alpha, 1 beta, 1 beta' and 1 omega subunit. When a sigma factor is associated with the core the holoenzyme is formed, which can initiate transcription.

The catalysed reaction is RNA(n) + a ribonucleoside 5'-triphosphate = RNA(n+1) + diphosphate. Its function is as follows. DNA-dependent RNA polymerase catalyzes the transcription of DNA into RNA using the four ribonucleoside triphosphates as substrates. This is DNA-directed RNA polymerase subunit alpha from Ehrlichia canis (strain Jake).